The primary structure comprises 881 residues: Leucine--tRNA ligase (881 aa).

The 'HIGH' region signature appears at 48–58 (PYPSGKLHMGH). Residues 638-642 (KMSKS) carry the 'KMSKS' region motif. Lysine 641 lines the ATP pocket.

It belongs to the class-I aminoacyl-tRNA synthetase family.

It localises to the cytoplasm. The catalysed reaction is tRNA(Leu) + L-leucine + ATP = L-leucyl-tRNA(Leu) + AMP + diphosphate. This is Leucine--tRNA ligase from Janthinobacterium sp. (strain Marseille) (Minibacterium massiliensis).